A 1185-amino-acid chain; its full sequence is Chromosome partition protein Smc (1185 aa).

P32 to N39 lines the ATP pocket. Positions S228 to N503 form a coiled coil. Residues T300–A323 form a disordered region. Basic and acidic residues predominate over residues D307–R320. Residues S519–I637 form the SMC hinge domain. Coiled coils occupy residues Q675 to E928 and A989 to D1025.

It belongs to the SMC family. Homodimer.

It is found in the cytoplasm. Functionally, required for chromosome condensation and partitioning. The sequence is that of Chromosome partition protein Smc from Lactiplantibacillus plantarum (strain ATCC BAA-793 / NCIMB 8826 / WCFS1) (Lactobacillus plantarum).